The primary structure comprises 774 residues: Protein translocase subunit SecA 2 (774 aa).

ATP is bound by residues Gln94, Gly112–Thr116, and Asp501.

It belongs to the SecA family. Monomer and homodimer. Part of the essential Sec protein translocation apparatus which comprises SecA, SecYEG and auxiliary proteins SecDF. Other proteins may also be involved.

It localises to the cell membrane. Its subcellular location is the cytoplasm. It carries out the reaction ATP + H2O + cellular proteinSide 1 = ADP + phosphate + cellular proteinSide 2.. Part of the Sec protein translocase complex. Interacts with the SecYEG preprotein conducting channel. Has a central role in coupling the hydrolysis of ATP to the transfer of proteins into and across the cell membrane, serving as an ATP-driven molecular motor driving the stepwise translocation of polypeptide chains across the membrane. The chain is Protein translocase subunit SecA 2 from Mycobacterium sp. (strain JLS).